A 170-amino-acid chain; its full sequence is Nicotinamide-nucleotide adenylyltransferase (170 aa).

Belongs to the archaeal NMN adenylyltransferase family.

The protein resides in the cytoplasm. It catalyses the reaction beta-nicotinamide D-ribonucleotide + ATP + H(+) = diphosphate + NAD(+). Its pathway is cofactor biosynthesis; NAD(+) biosynthesis; NAD(+) from nicotinamide D-ribonucleotide: step 1/1. The polypeptide is Nicotinamide-nucleotide adenylyltransferase (Methanothrix thermoacetophila (strain DSM 6194 / JCM 14653 / NBRC 101360 / PT) (Methanosaeta thermophila)).